Here is a 287-residue protein sequence, read N- to C-terminus: ATP synthase gamma chain (287 aa).

This sequence belongs to the ATPase gamma chain family. In terms of assembly, F-type ATPases have 2 components, CF(1) - the catalytic core - and CF(0) - the membrane proton channel. CF(1) has five subunits: alpha(3), beta(3), gamma(1), delta(1), epsilon(1). CF(0) has three main subunits: a, b and c.

Its subcellular location is the cell inner membrane. Functionally, produces ATP from ADP in the presence of a proton gradient across the membrane. The gamma chain is believed to be important in regulating ATPase activity and the flow of protons through the CF(0) complex. The sequence is that of ATP synthase gamma chain from Klebsiella pneumoniae subsp. pneumoniae (strain ATCC 700721 / MGH 78578).